The sequence spans 186 residues: Ribosome-recycling factor (186 aa).

Belongs to the RRF family.

The protein resides in the cytoplasm. Functionally, responsible for the release of ribosomes from messenger RNA at the termination of protein biosynthesis. May increase the efficiency of translation by recycling ribosomes from one round of translation to another. In Rickettsia rickettsii (strain Iowa), this protein is Ribosome-recycling factor.